The sequence spans 95 residues: Integration host factor subunit beta (95 aa).

This sequence belongs to the bacterial histone-like protein family. As to quaternary structure, heterodimer of an alpha and a beta chain.

Functionally, this protein is one of the two subunits of integration host factor, a specific DNA-binding protein that functions in genetic recombination as well as in transcriptional and translational control. The polypeptide is Integration host factor subunit beta (Paracoccus denitrificans (strain Pd 1222)).